The sequence spans 467 residues: Membrane-bound lytic murein transglycosylase F (467 aa).

An N-terminal signal peptide occupies residues 1–33 (MTELFRHSKHLLASLALLSVLGLMLAMHPSPSA). Residues 34–266 (IERIMARGEL…KLEDRFYGHV (233 aa)) form a non-LT domain region. Positions 268-467 (QFNLYAARSF…RRDDTLIALN (200 aa)) are LT domain. Glutamate 313 is an active-site residue.

The protein in the N-terminal section; belongs to the bacterial solute-binding protein 3 family. In the C-terminal section; belongs to the transglycosylase Slt family.

The protein resides in the cell outer membrane. It carries out the reaction Exolytic cleavage of the (1-&gt;4)-beta-glycosidic linkage between N-acetylmuramic acid (MurNAc) and N-acetylglucosamine (GlcNAc) residues in peptidoglycan, from either the reducing or the non-reducing ends of the peptidoglycan chains, with concomitant formation of a 1,6-anhydrobond in the MurNAc residue.. Its function is as follows. Murein-degrading enzyme that degrades murein glycan strands and insoluble, high-molecular weight murein sacculi, with the concomitant formation of a 1,6-anhydromuramoyl product. Lytic transglycosylases (LTs) play an integral role in the metabolism of the peptidoglycan (PG) sacculus. Their lytic action creates space within the PG sacculus to allow for its expansion as well as for the insertion of various structures such as secretion systems and flagella. The sequence is that of Membrane-bound lytic murein transglycosylase F from Alcanivorax borkumensis (strain ATCC 700651 / DSM 11573 / NCIMB 13689 / SK2).